The chain runs to 367 residues: tRNA-specific 2-thiouridylase MnmA (367 aa).

ATP-binding positions include 11-18 (AMSGGVDS) and Met-37. The tract at residues 97-99 (NPD) is interaction with target base in tRNA. Catalysis depends on Cys-102, which acts as the Nucleophile. Cys-102 and Cys-199 are disulfide-bonded. ATP is bound at residue Gly-127. An interaction with tRNA region spans residues 149-151 (KDQ). Cys-199 acts as the Cysteine persulfide intermediate in catalysis. The interaction with tRNA stretch occupies residues 311 to 312 (RY).

This sequence belongs to the MnmA/TRMU family. Interacts with TusE.

The protein resides in the cytoplasm. The enzyme catalyses S-sulfanyl-L-cysteinyl-[protein] + uridine(34) in tRNA + AH2 + ATP = 2-thiouridine(34) in tRNA + L-cysteinyl-[protein] + A + AMP + diphosphate + H(+). In terms of biological role, catalyzes the 2-thiolation of uridine at the wobble position (U34) of tRNA(Lys), tRNA(Glu) and tRNA(Gln), leading to the formation of s(2)U34, the first step of tRNA-mnm(5)s(2)U34 synthesis. Sulfur is provided by IscS, via a sulfur-relay system. Binds ATP and its substrate tRNAs. This is tRNA-specific 2-thiouridylase MnmA from Buchnera aphidicola subsp. Schizaphis graminum (strain Sg).